The sequence spans 274 residues: NADPH-dependent 7-cyano-7-deazaguanine reductase (274 aa).

Position 80 to 82 (80 to 82) interacts with substrate; sequence VES. Position 82–83 (82–83) interacts with NADPH; that stretch reads SK. The active-site Thioimide intermediate is C181. The active-site Proton donor is D188. 220–221 serves as a coordination point for substrate; sequence HE. 249–250 provides a ligand contact to NADPH; sequence RG.

This sequence belongs to the GTP cyclohydrolase I family. QueF type 2 subfamily. As to quaternary structure, homodimer.

The protein resides in the cytoplasm. The enzyme catalyses 7-aminomethyl-7-carbaguanine + 2 NADP(+) = 7-cyano-7-deazaguanine + 2 NADPH + 3 H(+). It participates in tRNA modification; tRNA-queuosine biosynthesis. Functionally, catalyzes the NADPH-dependent reduction of 7-cyano-7-deazaguanine (preQ0) to 7-aminomethyl-7-deazaguanine (preQ1). In Burkholderia ambifaria (strain MC40-6), this protein is NADPH-dependent 7-cyano-7-deazaguanine reductase.